Reading from the N-terminus, the 290-residue chain is RxLR effector protein Avr4 (290 aa).

A signal peptide spans 1 to 24 (MRSLHILLVITASLLASLAVSAEA). The disordered stretch occupies residues 33 to 56 (VVENNKDKSRFLRDGGTTEAQTDE). A compositionally biased stretch (basic and acidic residues) spans 36–45 (NNKDKSRFLR). The RxLR-dEER signature appears at 42 to 58 (RFLRDGGTTEAQTDEER). The tract at residues 118-141 (KYERMQWQKLNEGQTLTYMRVGDR) is W1 motif. Positions 151–174 (QLLRWVAQKKTVKSVYDDLQIEGF) are W2 motif. Residues 224-247 (VFEKWAMEGTHIKSVIKTLNLNNK) form a W3 motif region. Residue asparagine 246 is glycosylated (N-linked (GlcNAc...) asparagine). Residues 249 to 270 (ASEMANNENFPALLKYVKLYLD) form a y motif region.

The protein belongs to the RxLR effector family.

Its subcellular location is the secreted. The protein resides in the host cytoplasm. It localises to the host nucleus. It is found in the host nucleolus. The protein localises to the host cytoskeleton. In terms of biological role, secreted effector that acts as an elicitor of hypersensitive response (HR) specifically on plants carrying defense protein R4, through its interaction with this protein. This Phytophthora mirabilis protein is RxLR effector protein Avr4.